The following is a 239-amino-acid chain: Protein GrpE (239 aa).

2 disordered regions span residues 1–60 (MIEN…SNND) and 208–239 (SMGP…SEDV). Residues 28-42 (SMQNSTTENDELSSQ) show a composition bias toward polar residues. Basic and acidic residues-rich tracts occupy residues 43 to 53 (KTEEINTEELK) and 216 to 225 (SQQEVEKDTV). The segment covering 226 to 239 (EGDVDSDANTSEDV) has biased composition (acidic residues).

Belongs to the GrpE family. Homodimer.

It localises to the cytoplasm. In terms of biological role, participates actively in the response to hyperosmotic and heat shock by preventing the aggregation of stress-denatured proteins, in association with DnaK and GrpE. It is the nucleotide exchange factor for DnaK and may function as a thermosensor. Unfolded proteins bind initially to DnaJ; upon interaction with the DnaJ-bound protein, DnaK hydrolyzes its bound ATP, resulting in the formation of a stable complex. GrpE releases ADP from DnaK; ATP binding to DnaK triggers the release of the substrate protein, thus completing the reaction cycle. Several rounds of ATP-dependent interactions between DnaJ, DnaK and GrpE are required for fully efficient folding. This is Protein GrpE from Prochlorococcus marinus (strain MIT 9301).